The primary structure comprises 690 residues: MEKILHMAEGIDIGEMPSYDLMLPKPSKGQKRYLSTYDGQNPPKKQAGSKFHVRARFEPVHFVASSSKAERQEDPYGPQTKDVNGRTHFASMPRNFYQDYTQDSFSIQDGNSQYCNSSGFIFTKDQPVATNMYFDSGNPAPSSTSQQANCQPAPEPPPSQMYPESLVAEKQYFIEKLTATIWKNLSNPEMTSGSDKINYTYMLTRCIQACKTNPEYIYAPLKEIPPADIPKNKKLLTDGYACEVRCQNIYLTTGYAGSKNGSRDRATELAVKLLQKRIEVRVVRRKFKHIIGEDLVVCQIGMLSYEFPPALKPPEDLVVLGKDASGQPIFNSSAKHWTNFVITENANDAIGILNNSASFNKMSIEYKYEMMPNRTWRCRVFLQDHCLAEGYGTKKTSKHAAADEALKVLQKTQPTYPSVKSSQCHSGSSPKGSGKKKDIKDLVVYENSSNPVCTLNDTAQFNRMTVEYVYERMTGLRWKCKVILESEVIAEAVGVKKSVKYEAAGEAVKTLKKTQPTVINNLKKGTVEDVISRNEIQGRSAEEAYKQQIKEDNIGNQLLRKMGWTGGGLGKSGEGIREPISVKEQHKREGLGLDVERVNKIAKRDIEQIIRNYARSESHSDLTFSTELTNDERKQIHQIAQKYGLKSKSHGVGHDRYLVVGRKRRKEDLLDQLKQEGQVGHYELVMPQAN.

The tract at residues 1–296 (MEKILHMAEG…FKHIIGEDLV (296 aa)) is active repression domain. The Nuclear localization signal signature appears at 25 to 45 (KPSKGQKRYLSTYDGQNPPKK). Disordered regions lie at residues 27–49 (SKGQ…QAGS), 65–85 (SSSK…DVNG), and 133–160 (YFDS…PPSQ). Residue Lys-68 forms a Glycyl lysine isopeptide (Lys-Gly) (interchain with G-Cter in SUMO2) linkage. The segment covering 139–150 (PAPSSTSQQANC) has biased composition (polar residues). Residues 296–388 (VVCQIGMLSY…RVFLQDHCLA (93 aa)) mediate DNA binding. Positions 414 to 425 (PTYPSVKSSQCH) are enriched in polar residues. Residues 414–436 (PTYPSVKSSQCHSGSSPKGSGKK) are disordered. Lys-500 participates in a covalent cross-link: Glycyl lysine isopeptide (Lys-Gly) (interchain with G-Cter in SUMO2). A G-patch domain is found at 551 to 596 (EDNIGNQLLRKMGWTGGGLGKSGEGIREPISVKEQHKREGLGLDVE). The 65-residue stretch at 600-664 (KIAKRDIEQI…DRYLVVGRKR (65 aa)) folds into the R3H domain. Residue Ser-618 is modified to Phosphoserine. Glycyl lysine isopeptide (Lys-Gly) (interchain with G-Cter in SUMO2) cross-links involve residues Lys-666 and Lys-674.

As to quaternary structure, interacts with NF-kappa-B. Interacts with XRN2. Interacts (via G-patch domain) with DHX15; promoting the RNA helicase activity of DHX15.

It is found in the nucleus. The protein localises to the nucleolus. Its function is as follows. Enhances the ATPase activity of DHX15 by acting like a brace that tethers mobile sections of DHX15 together, stabilizing a functional conformation with high RNA affinity of DHX15. Involved in the constitutive silencing of the interferon beta promoter, independently of the virus-induced signals, and in the inhibition of the basal and cytokine-induced iNOS promoter activity. Also involved in the regulation of IL-8 transcription. May also act as a DNA-binding transcription regulator: interacts with a specific negative regulatory element (NRE) 5'-AATTCCTCTGA-3' to mediate transcriptional repression of certain NK-kappa-B responsive genes. In Mus musculus (Mouse), this protein is NF-kappa-B-repressing factor (Nkrf).